The sequence spans 190 residues: Small ribosomal subunit protein uS5 (190 aa).

The 64-residue stretch at 21–84 folds into the S5 DRBM domain; that stretch reads FADRLVAINR…EQAKRQMIRV (64 aa). The interval 156–190 is disordered; sequence KKEQSPRSVAQRRGKKVADILPKRDEAPAAEAAEA. Over residues 171–182 the composition is skewed to basic and acidic residues; sequence KVADILPKRDEA.

Belongs to the universal ribosomal protein uS5 family. As to quaternary structure, part of the 30S ribosomal subunit. Contacts proteins S4 and S8.

Functionally, with S4 and S12 plays an important role in translational accuracy. In terms of biological role, located at the back of the 30S subunit body where it stabilizes the conformation of the head with respect to the body. This is Small ribosomal subunit protein uS5 from Ruegeria pomeroyi (strain ATCC 700808 / DSM 15171 / DSS-3) (Silicibacter pomeroyi).